The sequence spans 129 residues: Phosphoribosyl-AMP cyclohydrolase (129 aa).

Residue Asp-76 coordinates Mg(2+). Cys-77 provides a ligand contact to Zn(2+). 2 residues coordinate Mg(2+): Asp-78 and Asp-80. Positions 97 and 104 each coordinate Zn(2+).

This sequence belongs to the PRA-CH family. In terms of assembly, homodimer. Mg(2+) is required as a cofactor. Zn(2+) serves as cofactor.

It localises to the cytoplasm. The enzyme catalyses 1-(5-phospho-beta-D-ribosyl)-5'-AMP + H2O = 1-(5-phospho-beta-D-ribosyl)-5-[(5-phospho-beta-D-ribosylamino)methylideneamino]imidazole-4-carboxamide. The protein operates within amino-acid biosynthesis; L-histidine biosynthesis; L-histidine from 5-phospho-alpha-D-ribose 1-diphosphate: step 3/9. Its function is as follows. Catalyzes the hydrolysis of the adenine ring of phosphoribosyl-AMP. The polypeptide is Phosphoribosyl-AMP cyclohydrolase (Methylibium petroleiphilum (strain ATCC BAA-1232 / LMG 22953 / PM1)).